Reading from the N-terminus, the 97-residue chain is MESSSSSSGSALAAVDPQLQHFIEVETQKQRFQQLVHQMTELCWEKCMDKPGPKLDSRAEACFVNCVERFIDTSQFILNRLEQTQKSKPVFSESLSD.

The Twin CX3C motif motif lies at 43-66; it reads CWEKCMDKPGPKLDSRAEACFVNC. 2 disulfide bridges follow: cysteine 43-cysteine 66 and cysteine 47-cysteine 62. Phosphoserine occurs at positions 57, 87, 94, and 96.

It belongs to the small Tim family. In terms of assembly, heterohexamer; composed of 3 copies of TIMM8A and 3 copies of TIMM13, named soluble 70 kDa complex. Associates with the TIM22 complex, whose core is composed of TIMM22.

It is found in the mitochondrion inner membrane. Its function is as follows. Mitochondrial intermembrane chaperone that participates in the import and insertion of some multi-pass transmembrane proteins into the mitochondrial inner membrane. Also required for the transfer of beta-barrel precursors from the TOM complex to the sorting and assembly machinery (SAM complex) of the outer membrane. Acts as a chaperone-like protein that protects the hydrophobic precursors from aggregation and guide them through the mitochondrial intermembrane space. The TIMM8-TIMM13 complex mediates the import of proteins such as TIMM23, SLC25A12/ARALAR1 and SLC25A13/ARALAR2, while the predominant TIMM9-TIMM10 70 kDa complex mediates the import of much more proteins. The sequence is that of Mitochondrial import inner membrane translocase subunit Tim8 A (Timm8a) from Rattus norvegicus (Rat).